The following is a 306-amino-acid chain: UDP-N-acetylenolpyruvoylglucosamine reductase (306 aa).

One can recognise an FAD-binding PCMH-type domain in the interval 30 to 216 (RIGGPVPYIL…KSKLIDFSTR (187 aa)). The active site involves R180. The active-site Proton donor is S230. Residue E301 is part of the active site.

The protein belongs to the MurB family. FAD is required as a cofactor.

Its subcellular location is the cytoplasm. It carries out the reaction UDP-N-acetyl-alpha-D-muramate + NADP(+) = UDP-N-acetyl-3-O-(1-carboxyvinyl)-alpha-D-glucosamine + NADPH + H(+). It functions in the pathway cell wall biogenesis; peptidoglycan biosynthesis. Its function is as follows. Cell wall formation. The sequence is that of UDP-N-acetylenolpyruvoylglucosamine reductase from Petrotoga mobilis (strain DSM 10674 / SJ95).